The primary structure comprises 661 residues: L-type lectin-domain containing receptor kinase V.5 (661 aa).

The signal sequence occupies residues Met-1–Gly-25. Topologically, residues Tyr-26–Leu-282 are extracellular. The legume-lectin like stretch occupies residues Gln-30–Leu-250. 5 N-linked (GlcNAc...) asparagine glycosylation sites follow: Asn-45, Asn-64, Asn-116, Asn-198, and Asn-276. The chain crosses the membrane as a helical span at residues Ala-283–Phe-303. At Tyr-304–Arg-661 the chain is on the cytoplasmic side. In terms of domain architecture, Protein kinase spans Phe-338–Ala-596. Residues Leu-344–Val-352 and Lys-367 each bind ATP. Catalysis depends on Asp-464, which acts as the Proton acceptor.

In the C-terminal section; belongs to the protein kinase superfamily. Ser/Thr protein kinase family. This sequence in the N-terminal section; belongs to the leguminous lectin family. Autophosphorylated on a Ser residue. As to expression, expressed at low levels in stems, leaves, flowers and siliques.

It is found in the cell membrane. The catalysed reaction is L-seryl-[protein] + ATP = O-phospho-L-seryl-[protein] + ADP + H(+). It carries out the reaction L-threonyl-[protein] + ATP = O-phospho-L-threonyl-[protein] + ADP + H(+). In terms of biological role, confers resistance to the pathogenic oomycetes Phytophthora infestans and Phytophthora capsici, but confers susceptibility to the pathogenic bacteria Pseudomonas syringae. The chain is L-type lectin-domain containing receptor kinase V.5 from Arabidopsis thaliana (Mouse-ear cress).